Here is a 480-residue protein sequence, read N- to C-terminus: NADH-quinone oxidoreductase subunit N (480 aa).

13 helical membrane-spanning segments follow: residues 5–25 (NFLC…LFLY), 40–60 (IAIV…FTMY), 69–89 (ISSQ…FLVF), 110–130 (VIML…NFVM), 162–182 (YILT…FLYG), 204–224 (LGFV…PFHL), 237–257 (VTAY…IFVL), 266–286 (LIWN…GNLF), 296–316 (FFAF…IAGT), 324–344 (IFYT…IASV), 368–388 (AFVM…AGFF), 404–424 (ILVF…LLIV), and 450–470 (MVIC…YEYI).

Belongs to the complex I subunit 2 family. NDH-1 is composed of 14 different subunits. Subunits NuoA, H, J, K, L, M, N constitute the membrane sector of the complex.

It localises to the cell inner membrane. The catalysed reaction is a quinone + NADH + 5 H(+)(in) = a quinol + NAD(+) + 4 H(+)(out). Functionally, NDH-1 shuttles electrons from NADH, via FMN and iron-sulfur (Fe-S) centers, to quinones in the respiratory chain. The immediate electron acceptor for the enzyme in this species is believed to be a menaquinone. Couples the redox reaction to proton translocation (for every two electrons transferred, four hydrogen ions are translocated across the cytoplasmic membrane), and thus conserves the redox energy in a proton gradient. In Azobacteroides pseudotrichonymphae genomovar. CFP2, this protein is NADH-quinone oxidoreductase subunit N.